The sequence spans 530 residues: Serendipity locus protein alpha (530 aa).

As to expression, transient expression in blastoderm from nuclear cycle 11 to the onset of gastrulation.

The protein localises to the cytoplasm. It localises to the cell membrane. In terms of biological role, required for the cellularization of the syncytial blastoderm embryo. Involved in the localization of the actin filaments just prior to and during plasma membrane invagination. Sry-alpha together with nullo and bnk may provide auxiliary functions, by acting both to stabilize a large and dynamic microfilament structure and regulate its functions. This Drosophila melanogaster (Fruit fly) protein is Serendipity locus protein alpha (Sry-alpha).